The chain runs to 607 residues: NADH-ubiquinone oxidoreductase chain 5 (607 aa).

The next 16 membrane-spanning stretches (helical) occupy residues 3–23, 35–55, 84–104, 117–137, 140–160, 171–191, 210–230, 241–261, 272–292, 301–320, 324–344, 365–385, 405–427, 457–477, 482–502, and 586–606; these read IFTT…LISM, YTTT…LMFF, FFSI…MQFS, FIKY…ANNM, LFIG…WWYG, AILY…WFSL, LIPL…FGLH, TPVS…FLLV, FILT…AICA, IIAF…LGMN, LAFL…MCSG, IMPF…GMPF, NAWA…MRII, LAFG…PTSI, MPWF…LIAL, and LYFM…SINL.

The protein belongs to the complex I subunit 5 family. Core subunit of respiratory chain NADH dehydrogenase (Complex I) which is composed of 45 different subunits.

Its subcellular location is the mitochondrion inner membrane. The catalysed reaction is a ubiquinone + NADH + 5 H(+)(in) = a ubiquinol + NAD(+) + 4 H(+)(out). Its function is as follows. Core subunit of the mitochondrial membrane respiratory chain NADH dehydrogenase (Complex I) which catalyzes electron transfer from NADH through the respiratory chain, using ubiquinone as an electron acceptor. Essential for the catalytic activity and assembly of complex I. The polypeptide is NADH-ubiquinone oxidoreductase chain 5 (Mtnd5) (Mus musculus (Mouse)).